An 88-amino-acid chain; its full sequence is HssA/B-like protein 11 (88 aa).

The protein belongs to the hssA/B family.

This chain is HssA/B-like protein 11 (hssl11), found in Dictyostelium discoideum (Social amoeba).